Here is a 180-residue protein sequence, read N- to C-terminus: NADH-quinone oxidoreductase subunit I (180 aa).

2 4Fe-4S ferredoxin-type domains span residues 50-80 (LTRD…LQKA) and 90-119 (EFFR…LTPD). [4Fe-4S] cluster is bound by residues Cys-60, Cys-63, Cys-66, Cys-70, Cys-99, Cys-102, Cys-105, and Cys-109.

It belongs to the complex I 23 kDa subunit family. NDH-1 is composed of 13 different subunits. Subunits NuoA, H, J, K, L, M, N constitute the membrane sector of the complex. [4Fe-4S] cluster serves as cofactor.

It is found in the cell inner membrane. It catalyses the reaction a quinone + NADH + 5 H(+)(in) = a quinol + NAD(+) + 4 H(+)(out). NDH-1 shuttles electrons from NADH, via FMN and iron-sulfur (Fe-S) centers, to quinones in the respiratory chain. The immediate electron acceptor for the enzyme in this species is believed to be ubiquinone. Couples the redox reaction to proton translocation (for every two electrons transferred, four hydrogen ions are translocated across the cytoplasmic membrane), and thus conserves the redox energy in a proton gradient. The sequence is that of NADH-quinone oxidoreductase subunit I from Yersinia enterocolitica serotype O:8 / biotype 1B (strain NCTC 13174 / 8081).